The sequence spans 369 residues: Peptide chain release factor 1 (369 aa).

Position 234 is an N5-methylglutamine (Gln-234).

The protein belongs to the prokaryotic/mitochondrial release factor family. Post-translationally, methylated by PrmC. Methylation increases the termination efficiency of RF1.

The protein resides in the cytoplasm. Its function is as follows. Peptide chain release factor 1 directs the termination of translation in response to the peptide chain termination codons UAG and UAA. This is Peptide chain release factor 1 from Kocuria rhizophila (strain ATCC 9341 / DSM 348 / NBRC 103217 / DC2201).